The following is a 57-amino-acid chain: UPF0391 membrane protein RPD_2934 (57 aa).

The next 2 membrane-spanning stretches (helical) occupy residues 6–26 (WALI…TGVS) and 35–55 (ILFY…FTIF).

Belongs to the UPF0391 family.

The protein localises to the cell membrane. The sequence is that of UPF0391 membrane protein RPD_2934 from Rhodopseudomonas palustris (strain BisB5).